A 710-amino-acid chain; its full sequence is Probable GTP diphosphokinase RSH2, chloroplastic (710 aa).

The transit peptide at 1–63 directs the protein to the chloroplast; sequence MVVATTIALY…SSLFSSASVK (63 aa). In terms of domain architecture, HD spans 233–337; the sequence is YLQHCVETAM…IKLADRLHNM (105 aa).

Belongs to the RelA/SpoT family.

The protein localises to the plastid. The protein resides in the chloroplast. The catalysed reaction is GTP + ATP = guanosine 3'-diphosphate 5'-triphosphate + AMP. Functionally, probable ppGpp (guanosine 3'-diphosphate 5'-diphosphate) synthetase that may be involved in a rapid plant ppGpp-mediated response to pathogens and other stresses. The sequence is that of Probable GTP diphosphokinase RSH2, chloroplastic (RSH2) from Arabidopsis thaliana (Mouse-ear cress).